The primary structure comprises 274 residues: Large ribosomal subunit protein uL2 (274 aa).

Disordered regions lie at residues 28–54 and 223–265; these read APYA…TRHI and VAMN…KRTD. Positions 39–48 are enriched in low complexity; the sequence is KSGGRNNNGR.

Belongs to the universal ribosomal protein uL2 family. In terms of assembly, part of the 50S ribosomal subunit. Forms a bridge to the 30S subunit in the 70S ribosome.

Functionally, one of the primary rRNA binding proteins. Required for association of the 30S and 50S subunits to form the 70S ribosome, for tRNA binding and peptide bond formation. It has been suggested to have peptidyltransferase activity; this is somewhat controversial. Makes several contacts with the 16S rRNA in the 70S ribosome. This chain is Large ribosomal subunit protein uL2, found in Alteromonas mediterranea (strain DSM 17117 / CIP 110805 / LMG 28347 / Deep ecotype).